Here is a 478-residue protein sequence, read N- to C-terminus: Endoglucanase 18 (478 aa).

Residues 1–21 (MGKLLVVMLIGMFLAFESLEA) form the signal peptide. Asn29 carries N-linked (GlcNAc...) asparagine glycosylation. The active-site Nucleophile is Asp76. His398 is a catalytic residue. The segment at 433–452 (HTGAIVGGPNSSDQYSDKRT) is disordered. N-linked (GlcNAc...) asparagine glycosylation is present at Asn442. Residues Asp449 and Glu458 contribute to the active site.

The protein belongs to the glycosyl hydrolase 9 (cellulase E) family.

It is found in the secreted. It catalyses the reaction Endohydrolysis of (1-&gt;4)-beta-D-glucosidic linkages in cellulose, lichenin and cereal beta-D-glucans.. This is Endoglucanase 18 from Arabidopsis thaliana (Mouse-ear cress).